The chain runs to 95 residues: Aspartyl/glutamyl-tRNA(Asn/Gln) amidotransferase subunit C (95 aa).

Belongs to the GatC family. As to quaternary structure, heterotrimer of A, B and C subunits.

The enzyme catalyses L-glutamyl-tRNA(Gln) + L-glutamine + ATP + H2O = L-glutaminyl-tRNA(Gln) + L-glutamate + ADP + phosphate + H(+). It carries out the reaction L-aspartyl-tRNA(Asn) + L-glutamine + ATP + H2O = L-asparaginyl-tRNA(Asn) + L-glutamate + ADP + phosphate + 2 H(+). Functionally, allows the formation of correctly charged Asn-tRNA(Asn) or Gln-tRNA(Gln) through the transamidation of misacylated Asp-tRNA(Asn) or Glu-tRNA(Gln) in organisms which lack either or both of asparaginyl-tRNA or glutaminyl-tRNA synthetases. The reaction takes place in the presence of glutamine and ATP through an activated phospho-Asp-tRNA(Asn) or phospho-Glu-tRNA(Gln). This chain is Aspartyl/glutamyl-tRNA(Asn/Gln) amidotransferase subunit C, found in Sinorhizobium fredii (strain NBRC 101917 / NGR234).